A 122-amino-acid polypeptide reads, in one-letter code: Large ribosomal subunit protein uL14 (122 aa).

This sequence belongs to the universal ribosomal protein uL14 family. In terms of assembly, part of the 50S ribosomal subunit. Forms a cluster with proteins L3 and L19. In the 70S ribosome, L14 and L19 interact and together make contacts with the 16S rRNA in bridges B5 and B8.

Its function is as follows. Binds to 23S rRNA. Forms part of two intersubunit bridges in the 70S ribosome. The chain is Large ribosomal subunit protein uL14 from Desulforamulus reducens (strain ATCC BAA-1160 / DSM 100696 / MI-1) (Desulfotomaculum reducens).